A 656-amino-acid chain; its full sequence is Pumilio homology domain family member 6 (656 aa).

The segment at 1–107 (MAPLTKKTNG…GGENGNHTEQ (107 aa)) is disordered. Positions 13–23 (SAKEVSHSEKK) are enriched in basic and acidic residues. A phosphoserine; by CK2 mark is found at Ser31, Ser34, and Ser35. Phosphoserine occurs at positions 34 and 35. The segment covering 52–89 (SDDDDLDDLSTSDSEAEEEADELDISDDSEEHENENEE) has biased composition (acidic residues). Basic and acidic residues predominate over residues 90-107 (KEGKDKSEGGENGNHTEQ). In terms of domain architecture, PUM-HD spans 133–483 (RLRVKTPPLP…ELLSKFAPMF (351 aa)). 6 Pumilio repeats span residues 155 to 191 (ELSKDCISDLVLKHDASRIVQTLVKYSSKDRREQIVD), 192 to 227 (ALKGKFYVLATSAYGKYLLVKLLHYGSRSSRQTIIN), 228 to 264 (ELHGSLRKLMRHREGAYVVEDLFVLYATHEQRQQMIK), 340 to 376 (ELLHEQFAELVHTPEGSDVACTLVARANAKERKLILK), 377 to 413 (ALKNHAEKLIKNEYGNIVFITILNCVDDTVLVFKTFS), and 415 to 450 (TVKEHLQEFIIDKFGRRPWLYILLGLDGKYFSPIVK).

This sequence belongs to the PUF6 family. As to quaternary structure, component of the ASH1 mRNP composed of at least PUF6, SHE2, SHE3, SHE1 and the ASH1 mRNA. Interacts with SHE2 and FUN12. Phosphorylation by CK2 relieves translational repression activity.

Its subcellular location is the bud tip. The protein resides in the nucleus. The protein localises to the nucleolus. RNA-binding protein involved in post-transcriptional regulation. Component of the ASH1 mRNP which transports the ASH1 mRNA to the distal tip of the bud, where the ASH1 protein is translated and targeted to the daughter cell nucleus. Binds to the ASH1 3'-UTR containing the PUF consensus UUGU segment and represses its translation. This silencing of ASH1 mRNA is critical for asymmetric seggregation of ASH1 to the daughter cell nucleus. The polypeptide is Pumilio homology domain family member 6 (PUF6) (Saccharomyces cerevisiae (strain ATCC 204508 / S288c) (Baker's yeast)).